We begin with the raw amino-acid sequence, 502 residues long: Cytochrome P450 71B16 (502 aa).

A helical transmembrane segment spans residues 1–21 (MAISLLCLFLITLVSLIFVVK). Cys444 serves as a coordination point for heme.

The protein belongs to the cytochrome P450 family. Requires heme as cofactor.

It is found in the membrane. This Arabidopsis thaliana (Mouse-ear cress) protein is Cytochrome P450 71B16 (CYP71B16).